We begin with the raw amino-acid sequence, 145 residues long: UPF0260 protein VC_1058 (145 aa).

This sequence belongs to the UPF0260 family.

In Vibrio cholerae serotype O1 (strain ATCC 39315 / El Tor Inaba N16961), this protein is UPF0260 protein VC_1058.